The primary structure comprises 229 residues: 2-C-methyl-D-erythritol 4-phosphate cytidylyltransferase (229 aa).

It belongs to the IspD/TarI cytidylyltransferase family. IspD subfamily.

It carries out the reaction 2-C-methyl-D-erythritol 4-phosphate + CTP + H(+) = 4-CDP-2-C-methyl-D-erythritol + diphosphate. It functions in the pathway isoprenoid biosynthesis; isopentenyl diphosphate biosynthesis via DXP pathway; isopentenyl diphosphate from 1-deoxy-D-xylulose 5-phosphate: step 2/6. Catalyzes the formation of 4-diphosphocytidyl-2-C-methyl-D-erythritol from CTP and 2-C-methyl-D-erythritol 4-phosphate (MEP). The polypeptide is 2-C-methyl-D-erythritol 4-phosphate cytidylyltransferase (Clostridium acetobutylicum (strain ATCC 824 / DSM 792 / JCM 1419 / IAM 19013 / LMG 5710 / NBRC 13948 / NRRL B-527 / VKM B-1787 / 2291 / W)).